Reading from the N-terminus, the 215-residue chain is Nascent polypeptide-associated complex subunit alpha (215 aa).

Residues 1 to 81 (MPGEATETVP…SEKKARKAMS (81 aa)) form a disordered region. Residues 9-28 (VPATEQELPQPQAETGSGTE) show a composition bias toward polar residues. A compositionally biased stretch (acidic residues) spans 29–42 (SDSDESVPELEEQD). Position 43 is a phosphoserine; by ILK1 (Ser-43). Over residues 44 to 57 (TQTATQQAQLAAAA) the composition is skewed to low complexity. The tract at residues 69-80 (QSRSEKKARKAM) is required for DNA-binding. Residues 70–135 (SRSEKKARKA…AKIEDLSQQA (66 aa)) enclose the NAC-A/B domain. The tract at residues 93 to 108 (RVTIRKSKNILFVITK) is RNA/DNA-binding. Residue Ser-132 is modified to Phosphoserine. The residue at position 142 (Lys-142) is an N6-acetyllysine; alternate. A Glycyl lysine isopeptide (Lys-Gly) (interchain with G-Cter in SUMO2); alternate cross-link involves residue Lys-142. Thr-159 carries the post-translational modification Phosphothreonine; by GSK3-beta. Thr-161 is subject to Phosphothreonine. Phosphoserine is present on residues Ser-166, Ser-186, Ser-191, and Ser-203. Residues 176–213 (VEVKDIELVMSQANVSRAKAVRALKNNSNDIVNAIMEL) form the UBA domain.

The protein belongs to the NAC-alpha family. In terms of assembly, part of the nascent polypeptide-associated complex (NAC), which is a heterodimer of NACA and BTF3 (via NAC-A/B domains). NAC associates with ribosomes through the BTF3/NACB subunit and contacts the ribosomal protein L23, which is positioned near the exiting site. Both subunits can contact nascent polypeptide chains. NACA may also form homodimers, and only this form binds DNA. Interacts with TBP and JUN. Post-translationally, phosphorylation of Ser-43 by ILK during cell adhesion may promote nuclear localization. Phosphorylation of Thr-159 by GSK3B may promote proteasome mediated degradation. In terms of tissue distribution, isoform 1 appears to be ubiquitously expressed.

It localises to the cytoplasm. The protein localises to the nucleus. Its function is as follows. Prevents inappropriate targeting of non-secretory polypeptides to the endoplasmic reticulum (ER). Binds to nascent polypeptide chains as they emerge from the ribosome and blocks their interaction with the signal recognition particle (SRP), which normally targets nascent secretory peptides to the ER. Also reduces the inherent affinity of ribosomes for protein translocation sites in the ER membrane (M sites). Isoform 1 and isoform 2 appear to bind DNA and play roles in transcription. Isoform 1 may function as a specific coactivator for JUN, acting to stabilize the interaction of JUN homodimers with promoter elements. The protein is Nascent polypeptide-associated complex subunit alpha (Naca) of Mus musculus (Mouse).